The chain runs to 88 residues: MGFTDETVRFNLNDGDKDEISNTLTNVYRSLAEKGYNPINQIVGYVLSGDPAYVPRYNDARNQIRKYERDEIVEELVRYYLKGNGTDL.

This sequence belongs to the UPF0297 family.

The polypeptide is UPF0297 protein str1959 (Streptococcus thermophilus (strain CNRZ 1066)).